Consider the following 876-residue polypeptide: Alanine--tRNA ligase (876 aa).

Lys-74 bears the N6-acetyllysine mark. His-564, His-568, Cys-666, and His-670 together coordinate Zn(2+).

This sequence belongs to the class-II aminoacyl-tRNA synthetase family. Homotetramer. It depends on Zn(2+) as a cofactor.

It localises to the cytoplasm. The catalysed reaction is tRNA(Ala) + L-alanine + ATP = L-alanyl-tRNA(Ala) + AMP + diphosphate. Catalyzes the attachment of alanine to tRNA(Ala) in a two-step reaction: alanine is first activated by ATP to form Ala-AMP and then transferred to the acceptor end of tRNA(Ala). Also edits incorrectly charged Ser-tRNA(Ala) and Gly-tRNA(Ala) via its editing domain. The polypeptide is Alanine--tRNA ligase (Escherichia coli (strain ATCC 8739 / DSM 1576 / NBRC 3972 / NCIMB 8545 / WDCM 00012 / Crooks)).